A 670-amino-acid polypeptide reads, in one-letter code: Probable plastid-lipid-associated protein 14, chloroplastic (670 aa).

Residues Met1–Ser52 constitute a chloroplast transit peptide. One can recognise a Protein kinase domain in the interval Phe88–Leu399.

Belongs to the PAP/fibrillin family. Post-translationally, not autophosphorylated. As to expression, expressed in roots.

The protein resides in the plastid. The protein localises to the chloroplast. Functionally, directly regulated by DOF3.6/OBP3; unknown function. This chain is Probable plastid-lipid-associated protein 14, chloroplastic (PAP14), found in Arabidopsis thaliana (Mouse-ear cress).